Reading from the N-terminus, the 768-residue chain is 5-methyltetrahydropteroyltriglutamate--homocysteine methyltransferase (768 aa).

Residues 17–20 (RELK) and Lys-117 contribute to the 5-methyltetrahydropteroyltri-L-glutamate site. Residues 442–444 (IGS) and Glu-495 contribute to the L-homocysteine site. L-methionine is bound by residues 442-444 (IGS) and Glu-495. 5-methyltetrahydropteroyltri-L-glutamate-binding positions include 526-527 (RC) and Trp-572. Asp-610 lines the L-homocysteine pocket. An L-methionine-binding site is contributed by Asp-610. Glu-616 serves as a coordination point for 5-methyltetrahydropteroyltri-L-glutamate. Residues His-653, Cys-655, and Glu-677 each contribute to the Zn(2+) site. The active-site Proton donor is His-706. Cys-738 is a Zn(2+) binding site.

This sequence belongs to the vitamin-B12 independent methionine synthase family. The cofactor is Zn(2+).

The enzyme catalyses 5-methyltetrahydropteroyltri-L-glutamate + L-homocysteine = tetrahydropteroyltri-L-glutamate + L-methionine. It functions in the pathway amino-acid biosynthesis; L-methionine biosynthesis via de novo pathway; L-methionine from L-homocysteine (MetE route): step 1/1. Catalyzes the transfer of a methyl group from 5-methyltetrahydrofolate to homocysteine resulting in methionine formation. The sequence is that of 5-methyltetrahydropteroyltriglutamate--homocysteine methyltransferase from Bifidobacterium adolescentis (strain ATCC 15703 / DSM 20083 / NCTC 11814 / E194a).